Here is a 548-residue protein sequence, read N- to C-terminus: NAD(P)H-quinone oxidoreductase chain 4 (548 aa).

A run of 14 helical transmembrane segments spans residues 17–37 (VPWL…IPFI), 48–68 (WYAL…YLTG), 103–123 (LILL…PVTF), 127–147 (LFFF…AVQD), 149–169 (LLFF…LAIW), 181–201 (FILY…AMGF), 222–242 (GFQL…LPIV), 256–276 (TAPV…YALL), 290–310 (FAPL…LTSF), 327–347 (MGFV…GAML), 348–368 (QMIS…ATYD), 389–409 (FALW…SGFV), 430–450 (VVIC…LLSM), and 477–497 (VYII…PRLM).

This sequence belongs to the complex I subunit 4 family.

The protein localises to the cellular thylakoid membrane. It catalyses the reaction a plastoquinone + NADH + (n+1) H(+)(in) = a plastoquinol + NAD(+) + n H(+)(out). It carries out the reaction a plastoquinone + NADPH + (n+1) H(+)(in) = a plastoquinol + NADP(+) + n H(+)(out). Its function is as follows. NDH-1 shuttles electrons from NAD(P)H, via FMN and iron-sulfur (Fe-S) centers, to quinones in the respiratory chain. The immediate electron acceptor for the enzyme in this species is believed to be plastoquinone. Couples the redox reaction to proton translocation (for every two electrons transferred, four hydrogen ions are translocated across the cytoplasmic membrane), and thus conserves the redox energy in a proton gradient. The polypeptide is NAD(P)H-quinone oxidoreductase chain 4 (Synechococcus sp. (strain CC9902)).